Consider the following 111-residue polypeptide: Cytochrome c (111 aa).

Alanine 1 carries the post-translational modification N-acetylalanine. Residues cysteine 22, cysteine 25, and histidine 26 each contribute to the heme c site. At lysine 80 the chain carries N6,N6,N6-trimethyllysine. Methionine 88 contacts heme c. At lysine 94 the chain carries N6,N6,N6-trimethyllysine.

Belongs to the cytochrome c family. Post-translationally, binds 1 heme c group covalently per subunit.

The protein localises to the mitochondrion intermembrane space. Functionally, electron carrier protein. The oxidized form of the cytochrome c heme group can accept an electron from the heme group of the cytochrome c1 subunit of cytochrome reductase. Cytochrome c then transfers this electron to the cytochrome oxidase complex, the final protein carrier in the mitochondrial electron-transport chain. The sequence is that of Cytochrome c from Cannabis sativa (Hemp).